Consider the following 207-residue polypeptide: Ion-translocating oxidoreductase complex subunit G (207 aa).

A helical transmembrane segment spans residues 11–31; that stretch reads GILLGFIALLCTIISAGIFFL. The residue at position 175 (threonine 175) is an FMN phosphoryl threonine.

It belongs to the RnfG family. As to quaternary structure, the complex is composed of six subunits: RnfA, RnfB, RnfC, RnfD, RnfE and RnfG. FMN serves as cofactor.

The protein localises to the cell inner membrane. Part of a membrane-bound complex that couples electron transfer with translocation of ions across the membrane. The chain is Ion-translocating oxidoreductase complex subunit G from Haemophilus influenzae (strain ATCC 51907 / DSM 11121 / KW20 / Rd).